The primary structure comprises 862 residues: Short transient receptor potential channel 7 (862 aa).

The disordered stretch occupies residues 1–21; it reads MLRNSTFKNMQRRHTTLREKG. At 1–351 the chain is on the cytoplasmic side; the sequence is MLRNSTFKNM…GLRQQSIAVK (351 aa). Positions 10-21 are enriched in basic residues; that stretch reads MQRRHTTLREKG. At Thr-15 the chain carries Phosphothreonine; by PKG/PRKG1. ANK repeat units lie at residues 42-71, 77-106, 108-134, and 163-192; these read PEEE…TLNF, MGQN…LARV, DALL…FAQG, and HDIT…RIER. The helical transmembrane segment at 352–372 threads the bilayer; that stretch reads FLAVFGVSIGLPFLAIAYWIA. Topologically, residues 373 to 383 are extracellular; sequence PCSKLGRTLRS. A helical transmembrane segment spans residues 384–404; sequence PFMKFVAHAVSFTIFLGLLVV. The Cytoplasmic portion of the chain corresponds to 405 to 465; that stretch reads NASDRFEGVK…KEIWEEGPRE (61 aa). A helical membrane pass occupies residues 466-486; the sequence is YVLHLWNLLDFGMLSIFVASF. Over 487–537 the chain is Extracellular; the sequence is TARFMAFLKATEAQLYVDQHVQDDTLHNVSLPPEVAYFTYARDKWWPSDPQ. Asn-514 carries an N-linked (GlcNAc...) asparagine glycan. Residues 538 to 558 traverse the membrane as a helical segment; sequence IISEGLYAIAVVLSFSRIAYI. Over 559-581 the chain is Cytoplasmic; sequence LPANESFGPLQISLGRTVKDIFK. Residues 582–602 traverse the membrane as a helical segment; that stretch reads FMVIFIMVFVAFMIGMFNLYS. Topologically, residues 603–651 are extracellular; the sequence is YYRGAKYNPAFTTVEESFKTLFWSIFGLSEVISVVLKYDHKFIENIGYV. A helical membrane pass occupies residues 652 to 672; sequence LYGVYNVTMVVVLLNMLIAMI. Residues 673-862 are Cytoplasmic-facing; it reads NNSYQEIEED…HLRVNKGKDI (190 aa).

This sequence belongs to the transient receptor (TC 1.A.4) family. STrpC subfamily. TRPC7 sub-subfamily. In terms of assembly, interacts with MX1 and RNF24. Interacts (via ANK-repeat domains) with PRKG1. Post-translationally, phosphorylation by PRKG1 at Thr-15 negatively regulates TRPC7 activity.

The protein localises to the cell membrane. It localises to the nucleus envelope. It carries out the reaction Ca(2+)(in) = Ca(2+)(out). Forms a receptor-activated non-selective calcium permeant cation channel. Probably is operated by a phosphatidylinositol second messenger system activated by receptor tyrosine kinases or G-protein coupled receptors. Activated by diacylglycerol (DAG). May also be activated by intracellular calcium store depletion. The sequence is that of Short transient receptor potential channel 7 (TRPC7) from Homo sapiens (Human).